Reading from the N-terminus, the 257-residue chain is NAD-capped RNA hydrolase NudC (257 aa).

Residue Arg69 coordinates substrate. Zn(2+) contacts are provided by Cys98 and Cys101. Glu111 provides a ligand contact to substrate. 2 residues coordinate Zn(2+): Cys116 and Cys119. Tyr124 is a substrate binding site. Residues 125–248 (PQIAPCIIVA…TVARRLIEDT (124 aa)) form the Nudix hydrolase domain. Ala158, Glu174, and Glu178 together coordinate a divalent metal cation. A Nudix box motif is present at residues 159–180 (GFVEVGETLEQAVAREVMEESG). Substrate is bound at residue 192-199 (QPWPFPQS). Glu219 serves as a coordination point for a divalent metal cation. Residue Ala241 participates in substrate binding.

Belongs to the Nudix hydrolase family. NudC subfamily. As to quaternary structure, homodimer. Mg(2+) is required as a cofactor. The cofactor is Mn(2+). Requires Zn(2+) as cofactor.

It carries out the reaction a 5'-end NAD(+)-phospho-ribonucleoside in mRNA + H2O = a 5'-end phospho-adenosine-phospho-ribonucleoside in mRNA + beta-nicotinamide D-ribonucleotide + 2 H(+). It catalyses the reaction NAD(+) + H2O = beta-nicotinamide D-ribonucleotide + AMP + 2 H(+). The catalysed reaction is NADH + H2O = reduced beta-nicotinamide D-ribonucleotide + AMP + 2 H(+). In terms of biological role, mRNA decapping enzyme that specifically removes the nicotinamide adenine dinucleotide (NAD) cap from a subset of mRNAs by hydrolyzing the diphosphate linkage to produce nicotinamide mononucleotide (NMN) and 5' monophosphate mRNA. The NAD-cap is present at the 5'-end of some mRNAs and stabilizes RNA against 5'-processing. Has preference for mRNAs with a 5'-end purine. Catalyzes the hydrolysis of a broad range of dinucleotide pyrophosphates. The polypeptide is NAD-capped RNA hydrolase NudC (Salmonella dublin (strain CT_02021853)).